A 73-amino-acid polypeptide reads, in one-letter code: Translation initiation factor IF-1 (73 aa).

Positions 1-73 constitute an S1-like domain; the sequence is MAKKEDTIVL…TKARVVYRHR (73 aa).

This sequence belongs to the IF-1 family. In terms of assembly, component of the 30S ribosomal translation pre-initiation complex which assembles on the 30S ribosome in the order IF-2 and IF-3, IF-1 and N-formylmethionyl-tRNA(fMet); mRNA recruitment can occur at any time during PIC assembly.

It is found in the cytoplasm. One of the essential components for the initiation of protein synthesis. Stabilizes the binding of IF-2 and IF-3 on the 30S subunit to which N-formylmethionyl-tRNA(fMet) subsequently binds. Helps modulate mRNA selection, yielding the 30S pre-initiation complex (PIC). Upon addition of the 50S ribosomal subunit IF-1, IF-2 and IF-3 are released leaving the mature 70S translation initiation complex. The sequence is that of Translation initiation factor IF-1 from Chlamydia abortus (strain DSM 27085 / S26/3) (Chlamydophila abortus).